The following is a 913-amino-acid chain: Chitin synthase 1 (913 aa).

A disordered region spans residues 1–27; the sequence is MSGAPPPSSGFAPRSYGQQPLSHAPRS. Positions 237, 241, and 291 each coordinate UDP-N-acetyl-alpha-D-glucosamine. An N-linked (GlcNAc...) asparagine glycan is attached at asparagine 420. Aspartate 496 is a catalytic residue. Asparagine 510 carries an N-linked (GlcNAc...) asparagine glycan. Helical transmembrane passes span 539-559, 581-601, 625-645, 658-678, 684-704, and 711-731; these read WLNG…RIYS, YTAF…FIVF, AVYI…IIGL, FVGA…AGIF, TVHS…ASAL, and IFMT…IFTI. A Conserved SWG motif motif is present at residues 741 to 743; it reads SWG. The next 2 helical transmembrane spans lie at 800–820 and 825–845; these read VLLT…YFAS and MPVL…GSIG. 2 N-linked (GlcNAc...) asparagine glycosylation sites follow: asparagine 867 and asparagine 900.

The protein belongs to the chitin synthase family. Class II subfamily. As to quaternary structure, homodimer. Requires Mn(2+) as cofactor.

The protein localises to the cell membrane. The catalysed reaction is [(1-&gt;4)-N-acetyl-beta-D-glucosaminyl](n) + UDP-N-acetyl-alpha-D-glucosamine = [(1-&gt;4)-N-acetyl-beta-D-glucosaminyl](n+1) + UDP + H(+). The activity is inhibited by nikkomycin Z (NikZ). Polymerizes chitin, a structural polymer of the cell wall and septum, by transferring the sugar moiety of UDP-GlcNAc to the non-reducing end of the growing chitin polymer. Involved in mycelial growth, sporangial production, zoospore release and pathogenesis. This is Chitin synthase 1 from Phytophthora sojae (strain P6497) (Soybean stem and root rot agent).